A 459-amino-acid chain; its full sequence is Cysteine desulfurase (459 aa).

A mitochondrion-targeting transit peptide spans 1-17; sequence MVGSVAGNMLLRAAWRR. The pyridoxal 5'-phosphate site is built by Ala-129, Thr-130, Gln-237, Ser-257, and His-259. Residue Lys-260 is modified to N6-(pyridoxal phosphate)lysine. Thr-297 serves as a coordination point for pyridoxal 5'-phosphate. The Cysteine persulfide intermediate role is filled by Cys-383. Cys-383 contacts [2Fe-2S] cluster. Cys-383 lines the Zn(2+) pocket. A Cysteine persulfide modification is found at Cys-383.

This sequence belongs to the class-V pyridoxal-phosphate-dependent aminotransferase family. NifS/IscS subfamily. In terms of assembly, homodimer. Component of the mitochondrial core iron-sulfur cluster (ISC) complex composed of NFS1, LYRM4, NDUFAB1, ISCU, FXN, and FDX2; this complex is a heterohexamer containing two copies of each monomer. Component of cyteine desulfurase complex composed of NFS1, LYRM4 and NDUFAB1; this complex contributes to the activation of cysteine desulfurase activity and NFS1 stabilization. Interacts (homodimer form) with ISCU (D-state); each monomer interacts with the C-terminal regions of each NFS1 monomer. Interacts with HSPA9. Interacts (via homodimer form) with FDX2. Interacts (via homodimer form) with FXN. Interacts with LYRM4. Component of a complex composed of FXN, NFS1, LYRM4 and ISCU. Pyridoxal 5'-phosphate serves as cofactor. In terms of processing, N-gluconoylated. Cysteine persulfide intermediate is reduced by thiol-containing molecules like glutathione and L-cysteine. Persulfide reduction is a rate-limiting step of cysteine desulfurase catalytic cycle. As to expression, ubiquitous.

The protein resides in the mitochondrion. It catalyses the reaction (sulfur carrier)-H + L-cysteine = (sulfur carrier)-SH + L-alanine. The catalysed reaction is L-cysteinyl-[cysteine desulfurase] + L-cysteine = S-sulfanyl-L-cysteinyl-[cysteine desulfurase] + L-alanine. Active only in complex with LYRM4. Mitochondrial cysteine desulfurase, of the core iron-sulfur cluster (ISC) assembly complex, that catalyzes the desulfuration of L-cysteine to L-alanine, as component of the cysteine desulfurase complex, leading to the formation of a cysteine persulfide intermediate at the active site cysteine residue and participates in the [2Fe-2S] clusters assembly on the scaffolding protein ISCU. The persulfide is then transferred on the flexible Cys loop from the catalytic site of NFS1 to the surface of NFS1. After the NFS1-linked persulfide sulfur is transferred to one of the conserved Cys residues of the scaffold, a reaction assisted by FXN. The core iron-sulfur cluster (ISC) assembly complex is involved in the de novo synthesis of a [2Fe-2S] cluster, the first step of the mitochondrial iron-sulfur protein biogenesis. This process is initiated by the cysteine desulfurase complex (NFS1:LYRM4:NDUFAB1) that produces persulfide which is delivered on the scaffold protein ISCU in a FXN-dependent manner. Then this complex is stabilized by FDX2 which provides reducing equivalents to accomplish the [2Fe-2S] cluster assembly. Finally, the [2Fe-2S] cluster is transferred from ISCU to chaperone proteins, including HSCB, HSPA9 and GLRX5. This chain is Cysteine desulfurase, found in Mus musculus (Mouse).